The following is a 269-amino-acid chain: Phosphatidylglycerol--prolipoprotein diacylglyceryl transferase (269 aa).

A run of 7 helical transmembrane segments spans residues 10–30 (IAVS…LIGF), 56–76 (AIFY…ILFY), 91–111 (IWEG…AMFF), 126–146 (FLAP…FIGG), 172–192 (PSQL…LWFF), 200–220 (YCVS…VEFV), and 237–257 (EGQL…MAGL). R139 provides a ligand contact to a 1,2-diacyl-sn-glycero-3-phospho-(1'-sn-glycerol).

Belongs to the Lgt family.

It localises to the cell inner membrane. The catalysed reaction is L-cysteinyl-[prolipoprotein] + a 1,2-diacyl-sn-glycero-3-phospho-(1'-sn-glycerol) = an S-1,2-diacyl-sn-glyceryl-L-cysteinyl-[prolipoprotein] + sn-glycerol 1-phosphate + H(+). The protein operates within protein modification; lipoprotein biosynthesis (diacylglyceryl transfer). Its function is as follows. Catalyzes the transfer of the diacylglyceryl group from phosphatidylglycerol to the sulfhydryl group of the N-terminal cysteine of a prolipoprotein, the first step in the formation of mature lipoproteins. The sequence is that of Phosphatidylglycerol--prolipoprotein diacylglyceryl transferase from Marinomonas sp. (strain MWYL1).